The primary structure comprises 235 residues: MICOS complex subunit MIC25 (235 aa).

A lipid anchor (N-myristoyl glycine) is attached at Gly2. Ser13 and Ser31 each carry phosphoserine. Disordered regions lie at residues 31–90 (SENV…VKRY) and 106–132 (KRER…HEEQ). A coiled-coil region spans residues 129 to 176 (HEEQKSVRLARELESREAELRRRDTFYKEQLERIERKNAEMYKLSSEQ). In terms of domain architecture, CHCH spans 194 to 235 (EPVCSGLQAQILHCYRDRPHEVLLCSDLVKAYQRCVSAAHKG). 2 short sequence motifs (cx9C motif) span residues 197–207 (CSGLQAQILHC) and 218–228 (CSDLVKAYQRC). 2 disulfide bridges follow: Cys197/Cys228 and Cys207/Cys218.

The protein belongs to the MICOS complex subunit Mic19 family. Metazoan Mic25 subfamily. In terms of assembly, component of the mitochondrial contact site and cristae organizing system (MICOS) complex, composed of at least MICOS10/MIC10, CHCHD3/MIC19, CHCHD6/MIC25, APOOL/MIC27, IMMT/MIC60, APOO/MIC23/MIC26 and MICOS13/MIC13. This complex was also known under the names MINOS or MitOS complex. The MICOS complex associates with mitochondrial outer membrane proteins SAMM50, MTX1 and MTX2 (together described as components of the mitochondrial outer membrane sorting assembly machinery (SAM) complex) and DNAJC11, mitochondrial inner membrane protein TMEM11 and with HSPA9. The MICOS and SAM complexes together with DNAJC11 are part of a large protein complex spanning both membranes termed the mitochondrial intermembrane space bridging (MIB) complex. Interacts with DISC1. Interacts with DISC1. Interacts with IMMT/MIC60. As to quaternary structure, (Microbial infection) Interacts with human cytomegalovirus protein UL37 isoform vMIA; this interaction rewires mitochondria by engaging the conserved MICOS complex.

It is found in the mitochondrion inner membrane. It localises to the mitochondrion. Its function is as follows. Component of the MICOS complex, a large protein complex of the mitochondrial inner membrane that plays crucial roles in the maintenance of crista junctions, inner membrane architecture, and formation of contact sites to the outer membrane. In Homo sapiens (Human), this protein is MICOS complex subunit MIC25 (CHCHD6).